A 327-amino-acid chain; its full sequence is MFNDMPVFDYEDIQLIPNKCIINSRSEADTSVRLGNYTFKLPVIPANMQTIIDETIAEQLARDGYFYIMHRFDEEGRKPFIQRMHEQQLIASISVGVKDYEYDFVSSLKEDAPEFITIDIAHGHADSVIKMIKHIKAELPETFVIAGNVGTPEAVRELENAGADATKVGIGPGKVCITKVKTGFGTGGWQLAAVRWCAKAARKPIIADGGIRTHGDIAKSIRFGATMVMIGSLFAGHIESPGKMVEIDGQSFKEYYGSASEYQKGEHKNVEGKKILLPTKGHLADTLTEMKQDLQSSISYAGGRDLESLRRVNYVIVKNSIWNGDSI.

Cys176 (thioimidate intermediate) is an active-site residue. 205–228 (IIADGGIRTHGDIAKSIRFGATMV) contacts NADP(+).

The protein belongs to the IMPDH/GMPR family. GuaC type 2 subfamily.

The enzyme catalyses IMP + NH4(+) + NADP(+) = GMP + NADPH + 2 H(+). Its function is as follows. Catalyzes the irreversible NADPH-dependent deamination of GMP to IMP. It functions in the conversion of nucleobase, nucleoside and nucleotide derivatives of G to A nucleotides, and in maintaining the intracellular balance of A and G nucleotides. The protein is GMP reductase of Streptococcus equi subsp. equi (strain 4047).